Reading from the N-terminus, the 149-residue chain is Arginine regulator (149 aa).

The protein belongs to the ArgR family.

The protein localises to the cytoplasm. It functions in the pathway amino-acid degradation; L-arginine degradation via ADI pathway. In terms of biological role, regulates the transcription of the arc operon, involved in arginine catabolism. This is Arginine regulator (argR1) from Bacillus cereus (strain ATCC 10987 / NRS 248).